Consider the following 179-residue polypeptide: ATP synthase subunit b (179 aa).

The helical transmembrane segment at 27 to 47 (TAITFLVMLAVLAKFAWGPIV) threads the bilayer.

This sequence belongs to the ATPase B chain family. As to quaternary structure, F-type ATPases have 2 components, F(1) - the catalytic core - and F(0) - the membrane proton channel. F(1) has five subunits: alpha(3), beta(3), gamma(1), delta(1), epsilon(1). F(0) has three main subunits: a(1), b(2) and c(10-14). The alpha and beta chains form an alternating ring which encloses part of the gamma chain. F(1) is attached to F(0) by a central stalk formed by the gamma and epsilon chains, while a peripheral stalk is formed by the delta and b chains.

The protein localises to the cell inner membrane. Functionally, f(1)F(0) ATP synthase produces ATP from ADP in the presence of a proton or sodium gradient. F-type ATPases consist of two structural domains, F(1) containing the extramembraneous catalytic core and F(0) containing the membrane proton channel, linked together by a central stalk and a peripheral stalk. During catalysis, ATP synthesis in the catalytic domain of F(1) is coupled via a rotary mechanism of the central stalk subunits to proton translocation. Component of the F(0) channel, it forms part of the peripheral stalk, linking F(1) to F(0). This Anaeromyxobacter dehalogenans (strain 2CP-C) protein is ATP synthase subunit b.